The following is a 560-amino-acid chain: Cytosolic purine 5'-nucleotidase (560 aa).

Catalysis depends on D52, which acts as the Nucleophile. Residues D52 and D54 each contribute to the IMP site. D52 and D54 together coordinate Mg(2+). D54 serves as the catalytic Proton donor. ATP is bound by residues R144 and N154. Positions 202, 206, 215, 249, 250, 251, and 292 each coordinate IMP. D351 serves as a coordination point for Mg(2+). Position 418 is a phosphoserine (S418). 2 residues coordinate ATP: Q453 and R456. S502, S511, and S527 each carry phosphoserine. Residues 541–560 form a disordered region; the sequence is PQEITHCHDEDDDEEEEEEE. The interval 548-560 is required for tetramer assembly; the sequence is HDEDDDEEEEEEE. Residues 550 to 560 show a composition bias toward acidic residues; the sequence is EDDDEEEEEEE.

It belongs to the 5'(3')-deoxyribonucleotidase family. As to quaternary structure, homotetramer. Requires Mg(2+) as cofactor.

The protein resides in the cytoplasm. It localises to the cytosol. The catalysed reaction is a ribonucleoside 5'-phosphate + H2O = a ribonucleoside + phosphate. The enzyme catalyses a 2'-deoxyribonucleoside + a ribonucleoside 5'-phosphate = a ribonucleoside + a 2'-deoxyribonucleoside 5'-phosphate. It carries out the reaction IMP + H2O = inosine + phosphate. It catalyses the reaction GMP + H2O = guanosine + phosphate. The catalysed reaction is dIMP + H2O = 2'-deoxyinosine + phosphate. The enzyme catalyses dGMP + H2O = 2'-deoxyguanosine + phosphate. It carries out the reaction XMP + H2O = xanthosine + phosphate. It catalyses the reaction inosine + GMP = guanosine + IMP. The catalysed reaction is dGMP + inosine = 2'-deoxyguanosine + IMP. The enzyme catalyses dIMP + inosine = 2'-deoxyinosine + IMP. It carries out the reaction inosine + UMP = uridine + IMP. It catalyses the reaction inosine + CMP = cytidine + IMP. The catalysed reaction is inosine + AMP = IMP + adenosine. With respect to regulation, allosterically activated by various compounds including ATP, 2,3-BPG/2,3-Bisphosphoglyceric acid and Ap4A/P1,P4-bis(5'-adenosyl) tetraphosphate. Binding of an allosteric activator is a prerequisiste to magnesium and substrate binding. Inhibited by inorganic phosphate. Functionally, broad specificity cytosolic 5'-nucleotidase that catalyzes the dephosphorylation of 6-hydroxypurine nucleoside 5'-monophosphates. In addition, possesses a phosphotransferase activity by which it can transfer a phosphate from a donor nucleoside monophosphate to an acceptor nucleoside, preferably inosine, deoxyinosine and guanosine. Has the highest activities for IMP and GMP followed by dIMP, dGMP and XMP. Could also catalyze the transfer of phosphates from pyrimidine monophosphates but with lower efficiency. Through these activities regulates the purine nucleoside/nucleotide pools within the cell. The chain is Cytosolic purine 5'-nucleotidase from Rattus norvegicus (Rat).